The chain runs to 258 residues: Venom plasminogen activator Haly-PA (258 aa).

The signal sequence occupies residues 1 to 18; that stretch reads MALIRVLANLLILQLSYA. A propeptide spanning residues 19-24 is cleaved from the precursor; that stretch reads QKSSEL. The Peptidase S1 domain maps to 25–249; sequence VVGGDECNIN…HLDWIKSIIA (225 aa). 6 disulfide bridges follow: Cys-31/Cys-163, Cys-50/Cys-66, Cys-98/Cys-256, Cys-142/Cys-210, Cys-174/Cys-189, and Cys-200/Cys-225. Asn-44 is a glycosylation site (N-linked (GlcNAc...) asparagine). Catalysis depends on charge relay system residues His-65 and Asp-110. Ser-204 functions as the Charge relay system in the catalytic mechanism.

The protein belongs to the peptidase S1 family. Snake venom subfamily. As to quaternary structure, monomer. Post-translationally, glycosylated. Expressed by the venom gland.

The protein localises to the secreted. Snake venom serine protease that activates plasminogen. Displays indirect fibrino(geno)lytic activity through conversion of plasminogen to plasmin. Shows a preferential cleavage at Arg-|-Xaa instead of Lys-|-Xaa bonds. This chain is Venom plasminogen activator Haly-PA, found in Gloydius brevicauda (Korean slamosa snake).